The primary structure comprises 730 residues: Elongation factor 2 (730 aa).

Residues 19–229 form the tr-type G domain; it reads LMIRNIGIVA…GVSFSEVFNY (211 aa). Residues 28-35, 94-98, and 148-151 each bind GTP; these read AHIDHGKT, DTPGH, and NKVD. Residue histidine 596 is modified to Diphthamide.

Belongs to the TRAFAC class translation factor GTPase superfamily. Classic translation factor GTPase family. EF-G/EF-2 subfamily.

It is found in the cytoplasm. Functionally, catalyzes the GTP-dependent ribosomal translocation step during translation elongation. During this step, the ribosome changes from the pre-translocational (PRE) to the post-translocational (POST) state as the newly formed A-site-bound peptidyl-tRNA and P-site-bound deacylated tRNA move to the P and E sites, respectively. Catalyzes the coordinated movement of the two tRNA molecules, the mRNA and conformational changes in the ribosome. This Methanococcoides burtonii (strain DSM 6242 / NBRC 107633 / OCM 468 / ACE-M) protein is Elongation factor 2 (fusA).